Reading from the N-terminus, the 703-residue chain is Probable boron transporter 2 (703 aa).

The Cytoplasmic segment spans residues 1-35 (MEETFVPFEGIKNDLKGRLMCYKQDWTGGIKAGFR). A helical transmembrane segment spans residues 36-56 (ILAPTTYIFFASAIPVISFGE). Topologically, residues 57–75 (QLERSTDGVLTAVQTLAST) are extracellular. The helical transmembrane segment at 76 to 96 (AICGIIHSIIGGQPLLILGVA) threads the bilayer. Topologically, residues 97-120 (EPTVIMYTFMFNFAKGRPELGRNL) are cytoplasmic. Residues 121 to 141 (FLAWSGWVCVWTSLILFVLAI) form a helical membrane-spanning segment. At 142–155 (CGACSFINRFTRVA) the chain is on the extracellular side. A helical membrane pass occupies residues 156 to 176 (GELFGLLIAMLFMQQAIKGLV). Residues 177 to 195 (DEFRAPAREDLKLVEFLPS) lie on the Cytoplasmic side of the membrane. The chain crosses the membrane as a helical span at residues 196–216 (WRFANGMFALVLSFGLLITAL). The Extracellular portion of the chain corresponds to 217–233 (RSRKARSWRYGTGWLRS). The helical transmembrane segment at 234 to 254 (LVADYGVPLMVLVWTGVSYIP) threads the bilayer. Residues 255 to 289 (TGDVPKGIPRRLFSPNPWSPGAYENWTVVKEMLQV) lie on the Cytoplasmic side of the membrane. The helical transmembrane segment at 290 to 310 (PIVYIIGAFIPATMIAVLYYF) threads the bilayer. The Extracellular portion of the chain corresponds to 311-337 (DHSVASQLAQQKEFNLRKPSSYHYDLL). The helical transmembrane segment at 338–358 (LLGFLTLMCGLLGIPPSNGVI) threads the bilayer. The Cytoplasmic segment spans residues 359–480 (PQSPMHTKSL…AVMVGGCVAA (122 aa)). A helical transmembrane segment spans residues 481–501 (MPLLKMIPTSVLWGYFAFMAI). Over 502–557 (ESLPGNQFWERILLLFTAPSRRFKVLEDNHATFVETVPFKTIAMFTIFQTTYLLTC) the chain is Extracellular. A helical transmembrane segment spans residues 558–578 (FGLTWIPIAGVMFPLLIMFLI). Over 579–703 (PVRQYILPRF…SPLNPSSSSK (125 aa)) the chain is Cytoplasmic. The disordered stretch occupies residues 678–703 (EMSPRLSGKGQNSPKPSPLNPSSSSK).

The protein belongs to the anion exchanger (TC 2.A.31.3) family.

Its subcellular location is the membrane. Functionally, probable boron transporter. Boron is essential for maintaining the integrity of plants cell walls. This is Probable boron transporter 2 (BOR2) from Arabidopsis thaliana (Mouse-ear cress).